We begin with the raw amino-acid sequence, 93 residues long: uncharacterized protein (93 aa).

This is an uncharacterized protein from Sulfolobus islandicus filamentous virus (isolate Iceland/Hveragerdi) (SIFV).